Here is a 247-residue protein sequence, read N- to C-terminus: DNA repair protein RecO (247 aa).

The protein belongs to the RecO family.

In terms of biological role, involved in DNA repair and RecF pathway recombination. The chain is DNA repair protein RecO from Brucella abortus (strain 2308).